Here is a 226-residue protein sequence, read N- to C-terminus: NEDD8-specific protease 1 (226 aa).

It belongs to the peptidase C48 family.

In terms of biological role, processes the pre-form of the ubiquitin-like protein NEDD8/RUB1. Has the capacity to discriminate between NEDD8/RUB1 and ubiquitin. Has no SUMO protease activity. In Arabidopsis thaliana (Mouse-ear cress), this protein is NEDD8-specific protease 1 (NEDP1).